The sequence spans 343 residues: Pseudaminic acid synthase (343 aa).

Positions 287–343 (SLYASKDIKKGEMFSEENVKSVRPSFGLHPKFYQELLGKKASKDIKFGDALKQGDFQ) constitute an AFP-like domain.

This sequence belongs to the pseudaminic acid synthase family. A divalent metal cation serves as cofactor.

It catalyses the reaction 2,4-diacetamido-2,4,6-trideoxy-beta-L-altrose + phosphoenolpyruvate + H2O = pseudaminate + phosphate. Functionally, catalyzes the fifth step in the biosynthesis of pseudaminic acid, a sialic-acid-like sugar that is used to modify flagellin. Catalyzes the condensation of phosphoenolpyruvate with 2,4-diacetamido-2,4,6-trideoxy-beta-l-altropyranose, forming pseudaminic acid. In Campylobacter jejuni subsp. jejuni serotype O:2 (strain ATCC 700819 / NCTC 11168), this protein is Pseudaminic acid synthase (pseI).